An 860-amino-acid polypeptide reads, in one-letter code: Leucine--tRNA ligase (860 aa).

Residues 42–52 (PYPSGRLHMGH) carry the 'HIGH' region motif. Residues 619-623 (KMSKS) carry the 'KMSKS' region motif. Residue K622 participates in ATP binding.

Belongs to the class-I aminoacyl-tRNA synthetase family.

It localises to the cytoplasm. The catalysed reaction is tRNA(Leu) + L-leucine + ATP = L-leucyl-tRNA(Leu) + AMP + diphosphate. The protein is Leucine--tRNA ligase of Salmonella choleraesuis (strain SC-B67).